A 294-amino-acid chain; its full sequence is Probable porphobilinogen deaminase (294 aa).

An S-(dipyrrolylmethanemethyl)cysteine modification is found at cysteine 233.

It belongs to the HMBS family. Requires dipyrromethane as cofactor.

The enzyme catalyses 4 porphobilinogen + H2O = hydroxymethylbilane + 4 NH4(+). It functions in the pathway porphyrin-containing compound metabolism; protoporphyrin-IX biosynthesis; coproporphyrinogen-III from 5-aminolevulinate: step 2/4. Functionally, tetrapolymerization of the monopyrrole PBG into the hydroxymethylbilane pre-uroporphyrinogen in several discrete steps. This is Probable porphobilinogen deaminase from Sulfurisphaera tokodaii (strain DSM 16993 / JCM 10545 / NBRC 100140 / 7) (Sulfolobus tokodaii).